A 153-amino-acid chain; its full sequence is Ergochrome gene cluster protein CPUR_05425 (153 aa).

It participates in pigment biosynthesis. Its function is as follows. Part of the ergochrome gene cluster responsible for the typical purple-black color of the ergot sclerotia. The ergochrome gene cluster produces several ergot pigments including the yellow ergochrome secalonic acid and its derivatives, as well as the red anthraquinones endocrocin and clavorubin. The pathway begins with the synthesis of atrochrysone thioester by the polyketide synthase (PKS) CPUR_05437. The atrochrysone carboxyl ACP thioesterase CPUR_05436 then breaks the thioester bond and releases the atrochrysone carboxylic acid from CPUR_05437. The atrochrysone carboxylic acid is then converted to atrochrysone which is further transformed into emodin anthrone. The next step is performed by the anthrone oxygenase CPUR_05434 that catalyzes the oxidation of emodinanthrone to emodin. Emodin is further modified to yield monodictyphenone via several steps involving CPUR_05427, CPUR_05428, CPUR_05429 and CPUR_05430. The short chain dehydrogenase/reductase CPUR_05418 then catalyzes the C-5 ketoreduction to give the xanthone skeleton of the monomeric units. Ergochromes formation requires further dimerization steps of different xanthone units, probably catalyzed by the cytochrome P450 monooxygenase CPUR_05419. CPUR_05425, CPUR_05426 and CPUR_05431 are unique to Claviceps, thus it is likely that they are involved in further modification of xanthone units or in their dimerization. The yellow ergochromes and the red anthraquinone pigments endocrocin and clavorubin are products from the same PKS derived precursors and the latter are likely shunt products in the pathway of xanthone biosynthesis. It is proposed that atrochrysone carboxylic acid released from the PKS CPUR_05437 can also be converted to endocrocin anthrone which is further oxidized into endocrocin by CPUR_05435. Endocrocin could be then modified to clavorubin, possibly by CPUR_05423 and CPUR_05431. Clavorubin is the principal anthraquinone metabolite produced by the cluster with a much higher yield compared to endocrocin. This chain is Ergochrome gene cluster protein CPUR_05425, found in Claviceps purpurea (strain 20.1) (Ergot fungus).